The following is a 974-amino-acid chain: Protein bicaudal C homolog 1 (974 aa).

Residues 1-50 form a disordered region; the sequence is MAAQGEPGYLAAQSDPGSNSERSTDSPVPGSEDDLVAGATLHSPEWSEER. A phosphoserine mark is found at S26, S31, and S43. 2 KH domains span residues 132–199 and 284–348; these read RVTL…RVRI and PVST…RQYL. K398 carries the post-translational modification N6-acetyllysine. Phosphoserine is present on residues S576, S612, and S679. Disordered stretches follow at residues 593-644, 665-719, and 783-846; these read VLSA…GDLK, GTKN…HLAP, and YKPT…KSTE. Residues 602-619 show a composition bias toward polar residues; sequence SIQTSGSEQTSPKSSPTE. A compositionally biased stretch (basic and acidic residues) spans 690 to 703; sequence LADKKAPGSERAAE. In terms of domain architecture, SAM spans 873–936; it reads FKGSDLPELF…LLAISELNKN (64 aa).

Belongs to the BicC family. In terms of assembly, interacts (via KH domains) with ANKS6 (via SAM domain) in an RNA-dependent manner. Interacts with ANKS3.

Its subcellular location is the cytoplasm. Its function is as follows. Putative RNA-binding protein. Acts as a negative regulator of Wnt signaling. May be involved in regulating gene expression during embryonic development. This is Protein bicaudal C homolog 1 (BICC1) from Homo sapiens (Human).